Here is a 633-residue protein sequence, read N- to C-terminus: Probable methyltransferase PMT17 (633 aa).

The Cytoplasmic portion of the chain corresponds to 1 to 18 (MAKENSGHHHQTEARRKK). The helical; Signal-anchor for type II membrane protein transmembrane segment at 19-39 (LTLILGVSGLCILFYVLGAWQ) threads the bilayer. The Lumenal portion of the chain corresponds to 40 to 633 (ANTVPSSISK…NNNNNNNNNN (594 aa)). Positions 50–71 (LGCETQSNPSSSSSSSSSSESA) are disordered. The span at 59 to 70 (SSSSSSSSSSES) shows a compositional bias: low complexity. A glycan (N-linked (GlcNAc...) asparagine) is linked at Asn-87.

This sequence belongs to the methyltransferase superfamily.

Its subcellular location is the endoplasmic reticulum membrane. The chain is Probable methyltransferase PMT17 from Arabidopsis thaliana (Mouse-ear cress).